The primary structure comprises 178 residues: MATRLQKALTEVGNHTTGNLNSLKIKTVAHGAKVTGSDIDNFMLVELGFDAEGNRTASKLSDKTKKAYLIASPEARYLGESMRDFYNGVGEHARIVILEPAYTRFDVSAFSFNTGVTEVKQGQVAHFDIATQKYILSDPTSPHEDYADSSAKFLVVNNEDDLVYTMGQKLVRLEVIEA.

This is SPbeta prophage-derived uncharacterized protein YonC (yonC) from Bacillus subtilis (strain 168).